The chain runs to 178 residues: Large ribosomal subunit protein uL6 (178 aa).

This sequence belongs to the universal ribosomal protein uL6 family. As to quaternary structure, part of the 50S ribosomal subunit.

This protein binds to the 23S rRNA, and is important in its secondary structure. It is located near the subunit interface in the base of the L7/L12 stalk, and near the tRNA binding site of the peptidyltransferase center. In Paenarthrobacter aurescens (strain TC1), this protein is Large ribosomal subunit protein uL6.